Consider the following 240-residue polypeptide: Octanoyltransferase (240 aa).

One can recognise a BPL/LPL catalytic domain in the interval 31–216 (GQVGDTLLLL…HLCAVFDLEP (186 aa)). Substrate contacts are provided by residues 76–83 (RGGGATYH), 145–147 (AIG), and 159–161 (GLA). Cys177 serves as the catalytic Acyl-thioester intermediate.

This sequence belongs to the LipB family.

The protein resides in the cytoplasm. The catalysed reaction is octanoyl-[ACP] + L-lysyl-[protein] = N(6)-octanoyl-L-lysyl-[protein] + holo-[ACP] + H(+). It participates in protein modification; protein lipoylation via endogenous pathway; protein N(6)-(lipoyl)lysine from octanoyl-[acyl-carrier-protein]: step 1/2. Functionally, catalyzes the transfer of endogenously produced octanoic acid from octanoyl-acyl-carrier-protein onto the lipoyl domains of lipoate-dependent enzymes. Lipoyl-ACP can also act as a substrate although octanoyl-ACP is likely to be the physiological substrate. The chain is Octanoyltransferase from Roseiflexus sp. (strain RS-1).